A 321-amino-acid polypeptide reads, in one-letter code: Peroxidase 27 (321 aa).

The N-terminal stretch at 1–23 (MAASKRLVVSCLFLVLLFAQANS) is a signal peptide. 4 disulfide bridges follow: cysteine 35–cysteine 113, cysteine 68–cysteine 73, cysteine 119–cysteine 317, and cysteine 196–cysteine 228. The active-site Proton acceptor is the histidine 66. 5 residues coordinate Ca(2+): aspartate 67, valine 70, glycine 72, aspartate 74, and serine 76. Residue proline 159 participates in substrate binding. The N-linked (GlcNAc...) asparagine glycan is linked to asparagine 164. Histidine 189 is a heme b binding site. Threonine 190 provides a ligand contact to Ca(2+). N-linked (GlcNAc...) asparagine glycosylation occurs at asparagine 205. 3 residues coordinate Ca(2+): aspartate 240, serine 243, and aspartate 248.

The protein belongs to the peroxidase family. Classical plant (class III) peroxidase subfamily. It depends on heme b as a cofactor. Ca(2+) serves as cofactor. As to expression, expressed in the whole plant, but preferentially in roots and flowers.

It localises to the secreted. The catalysed reaction is 2 a phenolic donor + H2O2 = 2 a phenolic radical donor + 2 H2O. Functionally, removal of H(2)O(2), oxidation of toxic reductants, biosynthesis and degradation of lignin, suberization, auxin catabolism, response to environmental stresses such as wounding, pathogen attack and oxidative stress. These functions might be dependent on each isozyme/isoform in each plant tissue. In Arabidopsis thaliana (Mouse-ear cress), this protein is Peroxidase 27 (PER27).